The sequence spans 351 residues: Sesquiterpene synthase 14 (351 aa).

Aspartate 87, asparagine 223, serine 227, and glutamate 231 together coordinate Mg(2+). The DDXXD motif signature appears at 87–91 (DEYTD). Residues 223-231 (NDIASYNKE) carry the NSE/DTE motif motif. (2E,6E)-farnesyl diphosphate-binding residues include arginine 312 and tyrosine 313.

The protein belongs to the terpene synthase family. It depends on Mg(2+) as a cofactor.

The catalysed reaction is (2E,6E)-farnesyl diphosphate = pentalenene + diphosphate. Functionally, terpene cyclase that catalyzes the cyclization of farnesyl diphosphate (FPP) to pentalenene as a major product, as well as caryophyllene. The chain is Sesquiterpene synthase 14 from Postia placenta (strain ATCC 44394 / Madison 698-R) (Brown rot fungus).